A 196-amino-acid chain; its full sequence is Probable GTP-binding protein EngB (196 aa).

Residues 24-196 (ELSEVALSGR…IWNLIEPYIS (173 aa)) form the EngB-type G domain. Residues 32–39 (GRSNVGKS), 59–63 (GKTQT), 77–80 (DVPG), 144–147 (TKED), and 176–178 (YSS) contribute to the GTP site. Mg(2+) contacts are provided by S39 and T61.

Belongs to the TRAFAC class TrmE-Era-EngA-EngB-Septin-like GTPase superfamily. EngB GTPase family. The cofactor is Mg(2+).

Its function is as follows. Necessary for normal cell division and for the maintenance of normal septation. The polypeptide is Probable GTP-binding protein EngB (Staphylococcus aureus (strain MRSA252)).